The sequence spans 462 residues: Glutamate--tRNA ligase 1 (462 aa).

A 'HIGH' region motif is present at residues 8-18; sequence PSPTGYLHIGG. The 'KMSKS' region motif lies at 236-240; that stretch reads KLSKR. Lysine 239 lines the ATP pocket.

It belongs to the class-I aminoacyl-tRNA synthetase family. Glutamate--tRNA ligase type 1 subfamily. In terms of assembly, monomer.

The protein localises to the cytoplasm. The enzyme catalyses tRNA(Glu) + L-glutamate + ATP = L-glutamyl-tRNA(Glu) + AMP + diphosphate. Functionally, catalyzes the attachment of glutamate to tRNA(Glu) in a two-step reaction: glutamate is first activated by ATP to form Glu-AMP and then transferred to the acceptor end of tRNA(Glu). The sequence is that of Glutamate--tRNA ligase 1 from Sulfurovum sp. (strain NBC37-1).